Reading from the N-terminus, the 422-residue chain is Dioxygenase str8 (422 aa).

Zn(2+) is bound by residues Cys-73, Cys-75, Cys-78, and His-119. 3 residues coordinate Fe cation: His-243, Asp-245, and His-382.

Belongs to the gamma-BBH/TMLD family. It depends on Fe(2+) as a cofactor.

The protein operates within mycotoxin biosynthesis. In terms of biological role, dioxygenase; part of the gene cluster that mediates the biosynthesis of strobilurin A, an antifungal polyketide that contains a key beta-methoxyacrylate toxophore that targets the complex III of the mitochondrial electron transport chain. Strobilurin biosynthesis begins with construction of benzoyl CoA by step-wise elimination of ammonia from phenylalanine by the phenylalanine ammonia-lyase str11, oxygenation by str8 and retro-Claisen reaction to form benzoic acid, which is activated to its CoA thiolester benzoyl CoA by the dedicated CoA ligase str10. Benzoyl CoA forms the starter unit for the highly reducing polyketide synthase stpks1 that produces the polyketide prestrobilutin A. The FAD-dependent oxygenase str9 then catalyzes the key oxidative rearrangement responsible for the creation of the beta-methoxyacrylate toxophore. Str9 performs epoxidation of the 2,3 olefin of prestrobilutin A, followed by Meinwald rearrangement to furnish the aldehyde intermediate. Rapid enolization of the aldehyde intermediate would give the beta-methoxyacrylate skeleton and methylations catalyzed by str2 and str3 complete the synthesis and lead to the production of strobilurin A. The short-chain dehydrogenase stl2 and the dehydrogenase str4 play a role in the shunt pathway leading to the production of bolineol. The cluster encodes no obvious halogenase gene that could be involved in production of strobilurin B, nor any obvious dimethylallyl-transferase that could be involved in the production of strobilurin G. It is possible that unknown proteins encoded in, or near, the cluster (such as str1 or stl1) may form new classes of halogenases or dimethylally-transferases, or that the responsible genes are located elsewhere on the genome. Similarly, proteins encoded by str5/str6 hydrolases appear to have no chemical role in the biosynthesis of strobilurin A. Finally, no obvious self-resistance gene is found within the cluster. The protein is Dioxygenase str8 of Strobilurus tenacellus.